We begin with the raw amino-acid sequence, 1446 residues long: Toll-like receptor 7 (1446 aa).

An N-terminal signal peptide occupies residues methionine 1–alanine 16. At valine 17–proline 1049 the chain is on the extracellular side. LRR repeat units follow at residues leucine 133–glycine 156, alanine 158–leucine 180, leucine 188–proline 211, glycine 213–aspartate 235, glycine 246–arginine 270, leucine 271–glycine 294, leucine 295–glycine 318, lysine 320–arginine 342, glutamate 344–glycine 368, leucine 369–glutamate 392, leucine 393–proline 416, leucine 417–glycine 440, tyrosine 442–asparagine 464, cysteine 465–leucine 488, alanine 489–asparagine 511, histidine 513–aspartate 535, leucine 536–lysine 559, phenylalanine 561–threonine 582, valine 584–proline 605, serine 606–glutamate 629, isoleucine 631–proline 652, asparagine 653–aspartate 675, and alanine 677–valine 699. The 58-residue stretch at asparagine 716–arginine 773 folds into the LRRCT domain. 3 cysteine pairs are disulfide-bonded: cysteine 722–cysteine 772, cysteine 796–cysteine 802, and cysteine 800–cysteine 815. 6 LRR repeats span residues proline 828 to glycine 851, arginine 852 to serine 875, leucine 876 to glutamine 899, leucine 900 to proline 923, alanine 925 to alanine 947, and glycine 951 to alanine 979. Cysteine 966 and cysteine 993 form a disulfide bridge. A helical transmembrane segment spans residues leucine 1050–phenylalanine 1070. Residues arginine 1071 to valine 1446 lie on the Cytoplasmic side of the membrane. The TIR domain maps to lysine 1096–leucine 1233. Disordered regions lie at residues glutamine 1301–leucine 1332 and arginine 1388–valine 1446. Over residues histidine 1395 to histidine 1413 the composition is skewed to polar residues. Residues glutamine 1414 to glutamine 1426 show a composition bias toward low complexity. A compositionally biased stretch (polar residues) spans proline 1427 to proline 1439.

The protein belongs to the Toll-like receptor family. In terms of tissue distribution, expressed in the fan-shaped body and the ellipsoid body, which are components of the locomotion center in the CNS (at protein level).

Its subcellular location is the cell membrane. Toll-related receptor which binds to the neurotrophins NT1 and spz5. Essential for antiviral autophagy, it detects and binds to the vesicular stomatitis virus (vsv) following infection. This role is likely to be independent of the canonical Toll, immune deficiency, and JAK-STAT signaling pathways. Functions in olfactory circuit assembly by promoting synaptic partner matching between olfactory receptor neurons (ORN) axons and projection neurons (PN) dendrites partners in the antennal lobe. Function in the Va1d ORNs is necessary and sufficient for correct targeting to their partner PN dendrites. Also involved in the targeting of other classes of ORN axons. Functions with Toll-6 to regulate motor axon targeting and neuronal survival in the central nervous system (CNS). May be an upstream component of the NF-kappa-B (rel) regulatory cascade. This is Toll-like receptor 7 from Drosophila melanogaster (Fruit fly).